A 346-amino-acid chain; its full sequence is tRNA N6-adenosine threonylcarbamoyltransferase (346 aa).

The Fe cation site is built by His-117 and His-121. Residues 139–143, Asp-172, Gly-185, Asp-189, and Asn-278 each bind substrate; that span reads VVSGG. Residue Asp-307 coordinates Fe cation.

This sequence belongs to the KAE1 / TsaD family. As to quaternary structure, may form a heterodimer with TsaB. Requires Fe(2+) as cofactor.

It localises to the cytoplasm. It catalyses the reaction L-threonylcarbamoyladenylate + adenosine(37) in tRNA = N(6)-L-threonylcarbamoyladenosine(37) in tRNA + AMP + H(+). In terms of biological role, required for the formation of a threonylcarbamoyl group on adenosine at position 37 (t(6)A37) in tRNAs that read codons beginning with adenine. Is involved in the transfer of the threonylcarbamoyl moiety of threonylcarbamoyl-AMP (TC-AMP) to the N6 group of A37, together with TsaE and TsaB; this reaction does not require ATP in vitro. TsaD likely plays a direct catalytic role in this reaction. The chain is tRNA N6-adenosine threonylcarbamoyltransferase from Bacillus subtilis (strain 168).